The chain runs to 195 residues: Interferon tau (195 aa).

Residues 1 to 23 form the signal peptide; sequence MAFVLSLLMALVLASYSPGGSLG. Disulfide bonds link Cys-24-Cys-122 and Cys-52-Cys-162.

The protein belongs to the alpha/beta interferon family. IFN-alphaII subfamily. As to expression, constitutively and exclusively expressed in the mononuclear cells of the extraembryonic trophectoderm.

The protein localises to the secreted. Functionally, paracrine hormone primarily responsible for maternal recognition of pregnancy. Interacts with endometrial receptors, probably type I interferon receptors, and blocks estrogen receptor expression, preventing the estrogen-induced increase in oxytocin receptor expression in the endometrium. This results in the suppression of the pulsatile endometrial release of the luteolytic hormone prostaglandin F2-alpha, hindering the regression of the corpus luteum (luteolysis) and therefore a return to ovarian cyclicity. This, and a possible direct effect of IFN-tau on prostaglandin synthesis, leads in turn to continued ovarian progesterone secretion, which stimulates the secretion by the endometrium of the nutrients required for the growth of the conceptus. In summary, displays particularly high antiviral and antiproliferative potency concurrently with particular weak cytotoxicity, high antiluteolytic activity and immunomodulatory properties. In contrast with other IFNs, IFN-tau is not virally inducible. This chain is Interferon tau (IFNT), found in Cervus elaphus (Red deer).